Consider the following 213-residue polypeptide: Thymidylate kinase (213 aa).

10 to 17 (GLEGAGKT) contributes to the ATP binding site.

Belongs to the thymidylate kinase family.

The enzyme catalyses dTMP + ATP = dTDP + ADP. Its function is as follows. Phosphorylation of dTMP to form dTDP in both de novo and salvage pathways of dTTP synthesis. This Salmonella dublin (strain CT_02021853) protein is Thymidylate kinase.